The following is a 413-amino-acid chain: Histidine--tRNA ligase (413 aa).

Belongs to the class-II aminoacyl-tRNA synthetase family. Homodimer.

Its subcellular location is the cytoplasm. The enzyme catalyses tRNA(His) + L-histidine + ATP = L-histidyl-tRNA(His) + AMP + diphosphate + H(+). The protein is Histidine--tRNA ligase of Wolbachia sp. subsp. Brugia malayi (strain TRS).